Here is a 58-residue protein sequence, read N- to C-terminus: SPbeta prophage-derived uncharacterized protein YonT (58 aa).

Residues 6-26 (GIVVAFLISLTVLTINSLTIV) form a helical membrane-spanning segment. Positions 35-58 (GTSKKKKRIRKRLRPKRQRQRIRR) are disordered. Over residues 36 to 58 (TSKKKKRIRKRLRPKRQRQRIRR) the composition is skewed to basic residues.

The protein resides in the cell membrane. In Bacillus subtilis (strain 168), this protein is SPbeta prophage-derived uncharacterized protein YonT (yonT).